Reading from the N-terminus, the 221-residue chain is MKFFATIAALVVGAVAAPVAEAEAEASSPMLIERAGPGGINYVQNYNGNLGQFTYNENAGTYSMYWNNGVNGDFVVGLGWSTGAARSITYSSNYQASGGSYLSVYGWINSPQAEYYIVESYGSYNPCGAGQSGVTQLGTVCSDGATYTVYTDTRTNQPSITGTSTFKQYWSVRQTKRTSGTVTTGNHFAYWAKYGFGNSYNFQVMPVEAFSGTGSASVTVS.

The signal sequence occupies residues 1–16; sequence MKFFATIAALVVGAVA. Positions 29–221 constitute a GH11 domain; that stretch reads PMLIERAGPG…GTGSASVTVS (193 aa). The Nucleophile role is filled by Glu-114. Glu-208 functions as the Proton donor in the catalytic mechanism.

It belongs to the glycosyl hydrolase 11 (cellulase G) family.

The protein localises to the secreted. It carries out the reaction Endohydrolysis of (1-&gt;4)-beta-D-xylosidic linkages in xylans.. The protein operates within glycan degradation; xylan degradation. Functionally, endo-1,4-beta-xylanase involved in the hydrolysis of xylan, a major structural heterogeneous polysaccharide found in plant biomass representing the second most abundant polysaccharide in the biosphere, after cellulose. The protein is Endo-1,4-beta-xylanase A (xynA) of Aureobasidium pullulans (Black yeast).